The primary structure comprises 177 residues: Endoribonuclease YbeY (177 aa).

The Zn(2+) site is built by His-118, His-122, and His-128.

The protein belongs to the endoribonuclease YbeY family. It depends on Zn(2+) as a cofactor.

It is found in the cytoplasm. Its function is as follows. Single strand-specific metallo-endoribonuclease involved in late-stage 70S ribosome quality control and in maturation of the 3' terminus of the 16S rRNA. The polypeptide is Endoribonuclease YbeY (Mycolicibacterium paratuberculosis (strain ATCC BAA-968 / K-10) (Mycobacterium paratuberculosis)).